A 449-amino-acid polypeptide reads, in one-letter code: Exodeoxyribonuclease 7 large subunit (449 aa).

The protein belongs to the XseA family. As to quaternary structure, heterooligomer composed of large and small subunits.

Its subcellular location is the cytoplasm. The enzyme catalyses Exonucleolytic cleavage in either 5'- to 3'- or 3'- to 5'-direction to yield nucleoside 5'-phosphates.. Functionally, bidirectionally degrades single-stranded DNA into large acid-insoluble oligonucleotides, which are then degraded further into small acid-soluble oligonucleotides. The chain is Exodeoxyribonuclease 7 large subunit from Salmonella paratyphi A (strain ATCC 9150 / SARB42).